The sequence spans 326 residues: Beta-ketoacyl-[acyl-carrier-protein] synthase III (326 aa).

Residues Cys112 and His251 contribute to the active site. The ACP-binding stretch occupies residues 252–256 (QANSR). Residue Asn281 is part of the active site.

It belongs to the thiolase-like superfamily. FabH family. As to quaternary structure, homodimer.

It localises to the cytoplasm. It carries out the reaction malonyl-[ACP] + acetyl-CoA + H(+) = 3-oxobutanoyl-[ACP] + CO2 + CoA. It functions in the pathway lipid metabolism; fatty acid biosynthesis. Its function is as follows. Catalyzes the condensation reaction of fatty acid synthesis by the addition to an acyl acceptor of two carbons from malonyl-ACP. Catalyzes the first condensation reaction which initiates fatty acid synthesis and may therefore play a role in governing the total rate of fatty acid production. Possesses both acetoacetyl-ACP synthase and acetyl transacylase activities. Its substrate specificity determines the biosynthesis of branched-chain and/or straight-chain of fatty acids. The sequence is that of Beta-ketoacyl-[acyl-carrier-protein] synthase III from Clostridium botulinum (strain 657 / Type Ba4).